Consider the following 393-residue polypeptide: Phosphopentomutase (393 aa).

6 residues coordinate Mn(2+): aspartate 15, aspartate 288, histidine 293, aspartate 329, histidine 330, and histidine 341.

This sequence belongs to the phosphopentomutase family. It depends on Mn(2+) as a cofactor.

The protein resides in the cytoplasm. It carries out the reaction 2-deoxy-alpha-D-ribose 1-phosphate = 2-deoxy-D-ribose 5-phosphate. The catalysed reaction is alpha-D-ribose 1-phosphate = D-ribose 5-phosphate. The protein operates within carbohydrate degradation; 2-deoxy-D-ribose 1-phosphate degradation; D-glyceraldehyde 3-phosphate and acetaldehyde from 2-deoxy-alpha-D-ribose 1-phosphate: step 1/2. Functionally, isomerase that catalyzes the conversion of deoxy-ribose 1-phosphate (dRib-1-P) and ribose 1-phosphate (Rib-1-P) to deoxy-ribose 5-phosphate (dRib-5-P) and ribose 5-phosphate (Rib-5-P), respectively. The chain is Phosphopentomutase from Halalkalibacterium halodurans (strain ATCC BAA-125 / DSM 18197 / FERM 7344 / JCM 9153 / C-125) (Bacillus halodurans).